The primary structure comprises 244 residues: Monothiol glutaredoxin-4 (244 aa).

In terms of domain architecture, Thioredoxin spans 3-110; it reads VVEIKSQDQF…FVKSLEILSN (108 aa). Positions 116-143 are disordered; sequence ANNAKGPKSTSDEESSGSSDDEEDETEE. Residues 127-143 are compositionally biased toward acidic residues; that stretch reads DEESSGSSDDEEDETEE. Positions 146-244 constitute a Glutaredoxin domain; it reads NARLVKLVQA…DPEYFQHALQ (99 aa). Residue lysine 163 coordinates glutathione. Residue cysteine 171 participates in [2Fe-2S] cluster binding. Residues arginine 200, phenylalanine 212, and 225 to 226 contribute to the glutathione site; that span reads LD.

Belongs to the glutaredoxin family. Monothiol subfamily. Homodimer. Heterodimer with FRA2.

Monothiol glutaredoxin involved in the biogenesis of iron-sulfur clusters. Binds one iron-sulfur cluster per dimer. The iron-sulfur cluster is bound between subunits, and is complexed by a bound glutathione and a cysteine residue from each subunit. This chain is Monothiol glutaredoxin-4 (GRX4), found in Saccharomyces cerevisiae (strain ATCC 204508 / S288c) (Baker's yeast).